The primary structure comprises 262 residues: Phosphatidylserine decarboxylase proenzyme (262 aa).

Catalysis depends on charge relay system; for autoendoproteolytic cleavage activity residues aspartate 86, histidine 142, and serine 226. Serine 226 serves as the catalytic Schiff-base intermediate with substrate; via pyruvic acid; for decarboxylase activity. Residue serine 226 is modified to Pyruvic acid (Ser); by autocatalysis.

It belongs to the phosphatidylserine decarboxylase family. PSD-B subfamily. Prokaryotic type I sub-subfamily. In terms of assembly, heterodimer of a large membrane-associated beta subunit and a small pyruvoyl-containing alpha subunit. The cofactor is pyruvate. In terms of processing, is synthesized initially as an inactive proenzyme. Formation of the active enzyme involves a self-maturation process in which the active site pyruvoyl group is generated from an internal serine residue via an autocatalytic post-translational modification. Two non-identical subunits are generated from the proenzyme in this reaction, and the pyruvate is formed at the N-terminus of the alpha chain, which is derived from the carboxyl end of the proenzyme. The autoendoproteolytic cleavage occurs by a canonical serine protease mechanism, in which the side chain hydroxyl group of the serine supplies its oxygen atom to form the C-terminus of the beta chain, while the remainder of the serine residue undergoes an oxidative deamination to produce ammonia and the pyruvoyl prosthetic group on the alpha chain. During this reaction, the Ser that is part of the protease active site of the proenzyme becomes the pyruvoyl prosthetic group, which constitutes an essential element of the active site of the mature decarboxylase.

The protein resides in the cell membrane. The catalysed reaction is a 1,2-diacyl-sn-glycero-3-phospho-L-serine + H(+) = a 1,2-diacyl-sn-glycero-3-phosphoethanolamine + CO2. It participates in phospholipid metabolism; phosphatidylethanolamine biosynthesis; phosphatidylethanolamine from CDP-diacylglycerol: step 2/2. Its function is as follows. Catalyzes the formation of phosphatidylethanolamine (PtdEtn) from phosphatidylserine (PtdSer). The polypeptide is Phosphatidylserine decarboxylase proenzyme (Bacillus mycoides (strain KBAB4) (Bacillus weihenstephanensis)).